An 831-amino-acid chain; its full sequence is DNA ligase (831 aa).

NAD(+) is bound by residues 34–38 (DADYD), 83–84 (SL), and glutamate 114. The N6-AMP-lysine intermediate role is filled by lysine 116. The NAD(+) site is built by arginine 137, glutamate 174, lysine 291, and lysine 315. 4 residues coordinate Zn(2+): cysteine 409, cysteine 412, cysteine 427, and cysteine 433. The BRCT domain occupies 749-831 (AHTAPLNGQS…LAFLGQYSAQ (83 aa)).

This sequence belongs to the NAD-dependent DNA ligase family. LigA subfamily. Mg(2+) is required as a cofactor. The cofactor is Mn(2+).

It catalyses the reaction NAD(+) + (deoxyribonucleotide)n-3'-hydroxyl + 5'-phospho-(deoxyribonucleotide)m = (deoxyribonucleotide)n+m + AMP + beta-nicotinamide D-nucleotide.. Functionally, DNA ligase that catalyzes the formation of phosphodiester linkages between 5'-phosphoryl and 3'-hydroxyl groups in double-stranded DNA using NAD as a coenzyme and as the energy source for the reaction. It is essential for DNA replication and repair of damaged DNA. This is DNA ligase from Xylella fastidiosa (strain 9a5c).